Reading from the N-terminus, the 135-residue chain is Lysozyme 2 (135 aa).

An N-terminal signal peptide occupies residues 1–18 (MNFLILFCVVASASVVYS). Residues 19–135 (SISDQCLRCI…WRLVQAKGCS (117 aa)) enclose the I-type lysozyme domain. 6 cysteine pairs are disulfide-bonded: Cys24/Cys100, Cys29/Cys35, Cys40/Cys49, Cys62/Cys82, Cys72/Cys78, and Cys96/Cys114. Glu32 acts as the Proton donor in catalysis. The Nucleophile role is filled by Asp43. 55–61 (KQGYWTD) lines the substrate pocket. Substrate-binding positions include Tyr86 and 107–109 (HNG).

Expressed in the epithelia of the basophil cells in the digestive tubules, but not in the epithelial cells lining the digestive ducts and stomach. Expressed at a much lower level in the style sac-midgut tissues. No expression detected in mantle, gills, labial palps or hemocytes.

The protein resides in the secreted. The enzyme catalyses Hydrolysis of (1-&gt;4)-beta-linkages between N-acetylmuramic acid and N-acetyl-D-glucosamine residues in a peptidoglycan and between N-acetyl-D-glucosamine residues in chitodextrins.. With respect to regulation, activity decreased by 80% by addition of 0.01 M calcium, zinc or magnesium. Activity only decreased by 17% by addition of ammonium, and by 2% by addition of sodium. In terms of biological role, the main role of this lysozyme is in digestion. Has antibacterial activity against the Gram-positive bacterium P.cerevisiae and the Gram-negative bacteria E.coli and V.vulnificus. Shows some chitinase activity but no isopeptidase activity. This Crassostrea virginica (Eastern oyster) protein is Lysozyme 2.